A 1037-amino-acid chain; its full sequence is Probable serine/threonine-protein kinase KCC4 (1037 aa).

Positions tryptophan 21–leucine 285 constitute a Protein kinase domain. Residues leucine 27–valine 35 and lysine 50 each bind ATP. Catalysis depends on aspartate 152, which acts as the Proton acceptor. Basic residues predominate over residues asparagine 372–arginine 387. Positions asparagine 372–threonine 494 are disordered. Low complexity predominate over residues serine 388–isoleucine 404. Serine 396 carries the phosphoserine modification. The segment covering proline 408–serine 427 has biased composition (basic residues). Residues asparagine 453–glycine 465 show a composition bias toward polar residues. The segment covering proline 469 to lysine 480 has biased composition (basic residues). Residues arginine 481 to threonine 494 are compositionally biased toward low complexity. Residues serine 675, serine 707, serine 777, serine 822, serine 825, and serine 871 each carry the phosphoserine modification. Disordered regions lie at residues leucine 746–glutamine 804, glutamine 810–glutamate 829, and threonine 861–lysine 918. A compositionally biased stretch (polar residues) spans threonine 861–glycine 873. Basic and acidic residues predominate over residues glycine 879–lysine 888.

This sequence belongs to the protein kinase superfamily. CAMK Ser/Thr protein kinase family. NIM1 subfamily. As to quaternary structure, interacts with septin proteins, primarily with CDC11. Interacts with SWE1 and NAP1.

The protein localises to the bud neck. It catalyses the reaction L-seryl-[protein] + ATP = O-phospho-L-seryl-[protein] + ADP + H(+). The catalysed reaction is L-threonyl-[protein] + ATP = O-phospho-L-threonyl-[protein] + ADP + H(+). In terms of biological role, involved in regulation of bud growth during cell cycle and in septin organization. Plays a role in cell wall synthesis. This is Probable serine/threonine-protein kinase KCC4 (KCC4) from Saccharomyces cerevisiae (strain ATCC 204508 / S288c) (Baker's yeast).